Reading from the N-terminus, the 77-residue chain is MKNLLYVVLLMAVCILGLLIVGTIFYLFLEVFMYFYVNAPISLESFQFTRLLKMSIYGGGILGLGIGLLRIFKIKGF.

2 consecutive transmembrane segments (helical) span residues 8-28 (VLLM…FYLF) and 54-74 (MSIY…IFKI).

As to quaternary structure, probably interacts with cognate toxin CdiA.

It is found in the membrane. Functionally, immunity protein component of a toxin-immunity protein module, which functions as a cellular contact-dependent growth inhibition (CDI) system. CDI modules allow bacteria to communicate with and inhibit the growth of closely related neighboring bacteria in a contact-dependent fashion. Protects cells against the CDI activity of CdiA, its cognate toxin protein, but not against non-cognate CdiA from E.coli strains 563, EC93 or D.dadantii strain 3937. The chain is Immunity protein CdiI (cdiI) from Yersinia pestis.